The chain runs to 91 residues: UPF0223 protein SACOL1106 (91 aa).

It belongs to the UPF0223 family.

This Staphylococcus aureus (strain COL) protein is UPF0223 protein SACOL1106.